Reading from the N-terminus, the 151-residue chain is UPF0208 membrane protein YfbV (151 aa).

Residues 1–45 (MSTPDNRSVNFFSLFCRGQHYSKTWPLEKRLAPVFVENRVIKMTR) lie on the Cytoplasmic side of the membrane. A helical membrane pass occupies residues 46 to 65 (YAIRFMPPIAVFTLCWQIAL). Topologically, residues 66-68 (GGQ) are periplasmic. The helical transmembrane segment at 69 to 91 (LGPAVATALFALSLPMQGLWWLG) threads the bilayer. The Cytoplasmic portion of the chain corresponds to 92–151 (KRSVTPLPPAILNWFYEVRGKLQESGQVLAPVEGKPDYQALADTLKRAFKQLDKTFLDDL).

This sequence belongs to the UPF0208 family.

The protein localises to the cell inner membrane. The chain is UPF0208 membrane protein YfbV (yfbV) from Escherichia coli O6:H1 (strain CFT073 / ATCC 700928 / UPEC).